Here is a 110-residue protein sequence, read N- to C-terminus: Mitochondrial pyruvate carrier 1 (110 aa).

2 helical membrane passes run 20 to 36 and 44 to 61; these read HFWG…AGLV and MISG…ALFM.

This sequence belongs to the mitochondrial pyruvate carrier (MPC) (TC 2.A.105) family.

The protein resides in the mitochondrion inner membrane. Its function is as follows. Mediates the uptake of pyruvate into mitochondria. This Arabidopsis thaliana (Mouse-ear cress) protein is Mitochondrial pyruvate carrier 1.